Here is a 645-residue protein sequence, read N- to C-terminus: MDLQEKIRTLPTGPGVYLYKNADGEVIYVGKAKNLRSRVRSYLLEASQANAKTGSLMREAVDLDYITVGNEHEALALENNLIKQRKPRFNVLLRDDKTYPYVKLTLGDRYPKVFVTRRLRKDGAAYYGPFFPGNLAYRIVDLIHRSFLLPSCKVDLSRYHARACLQYYIKRCLGPCVKHLTTPEAYREAVRDAQWFLEGRGADLERSLEVRMQEAAAAEQFELAAKYRDLLVTLHQLQEKQRVASADDDDADVFGYHYENGMLAVNLFHMRGGKMVDRREFFWEELPEFMEEGAQEEEVLPAQAEGRGEVQVELRFEPGAFFSALLKQIYIEQPYVPRSIYVPVNFADREALAGLLAEQTHHRIELAVPQRGDKRSLVDLAGQNARQSYEQRFRVMQPNQKAIQEALQDALMLEELPRRIECFDISHIQGAETVASMVVWENGAMKKADYRKFQIKTVSGVDDFASMREVLTRRYRRVIEEKQAMPDVILIDGGIGQLRAAAAALEELGQTTQTVASIAKREEIIYLYGHEDEPIVLERRSPVLHLVQRIRDESHRFAIAYHRKRREMRDRDSELLEIPGVGTRTRTRLLEHFGSLRGVRKADVEALTAVVPRPTAEAIAAHFQGEKAEPEAAAGLVRIDESKTV.

A GIY-YIG domain is found at 12–91 (TGPGVYLYKN…IKQRKPRFNV (80 aa)). The UVR domain occupies 202-237 (ADLERSLEVRMQEAAAAEQFELAAKYRDLLVTLHQL).

It belongs to the UvrC family. In terms of assembly, interacts with UvrB in an incision complex.

It localises to the cytoplasm. Functionally, the UvrABC repair system catalyzes the recognition and processing of DNA lesions. UvrC both incises the 5' and 3' sides of the lesion. The N-terminal half is responsible for the 3' incision and the C-terminal half is responsible for the 5' incision. This chain is UvrABC system protein C, found in Acidobacterium capsulatum (strain ATCC 51196 / DSM 11244 / BCRC 80197 / JCM 7670 / NBRC 15755 / NCIMB 13165 / 161).